A 621-amino-acid chain; its full sequence is Chaperone protein HtpG (621 aa).

Residues 1–328 form an a; substrate-binding region; the sequence is MKQEKKKFDA…SEDLPLNISR (328 aa). The interval 329-544 is b; sequence ESLQHNNVLE…EAAMDIRMER (216 aa). Residues 478–498 are disordered; the sequence is DVDQATSSSEEKNKDDKKSDD. The span at 486–498 shows a compositional bias: basic and acidic residues; the sequence is SEEKNKDDKKSDD. The segment at 545 to 621 is c; it reads FLIEQKQIAN…LNDIVQKAIL (77 aa).

The protein belongs to the heat shock protein 90 family. In terms of assembly, homodimer.

It localises to the cytoplasm. Molecular chaperone. Has ATPase activity. The sequence is that of Chaperone protein HtpG from Rickettsia bellii (strain RML369-C).